We begin with the raw amino-acid sequence, 232 residues long: Large ribosomal subunit protein uL1 (232 aa).

It belongs to the universal ribosomal protein uL1 family. In terms of assembly, part of the 50S ribosomal subunit.

Its function is as follows. Binds directly to 23S rRNA. The L1 stalk is quite mobile in the ribosome, and is involved in E site tRNA release. Functionally, protein L1 is also a translational repressor protein, it controls the translation of the L11 operon by binding to its mRNA. The chain is Large ribosomal subunit protein uL1 from Paraburkholderia phymatum (strain DSM 17167 / CIP 108236 / LMG 21445 / STM815) (Burkholderia phymatum).